Consider the following 172-residue polypeptide: Small ribosomal subunit protein uS5 (172 aa).

Positions 11 to 74 constitute an S5 DRBM domain; that stretch reads LFESVVDIAR…RKAKGAMIRF (64 aa).

It belongs to the universal ribosomal protein uS5 family. As to quaternary structure, part of the 30S ribosomal subunit. Contacts proteins S4 and S8.

Functionally, with S4 and S12 plays an important role in translational accuracy. In terms of biological role, located at the back of the 30S subunit body where it stabilizes the conformation of the head with respect to the body. The chain is Small ribosomal subunit protein uS5 from Neorickettsia sennetsu (strain ATCC VR-367 / Miyayama) (Ehrlichia sennetsu).